The sequence spans 460 residues: Proline--tRNA ligase (460 aa).

It belongs to the class-II aminoacyl-tRNA synthetase family. ProS type 3 subfamily. In terms of assembly, homodimer.

Its subcellular location is the cytoplasm. The catalysed reaction is tRNA(Pro) + L-proline + ATP = L-prolyl-tRNA(Pro) + AMP + diphosphate. Functionally, catalyzes the attachment of proline to tRNA(Pro) in a two-step reaction: proline is first activated by ATP to form Pro-AMP and then transferred to the acceptor end of tRNA(Pro). The protein is Proline--tRNA ligase of Methanococcus maripaludis (strain C7 / ATCC BAA-1331).